Here is a 404-residue protein sequence, read N- to C-terminus: Sodium/glutamate symporter (404 aa).

11 helical membrane-spanning segments follow: residues 5-25 (FSTYETLALASLVLLLGYFLV), 33-53 (TFNIPEPVVGGFIVAIGLLIW), 69-89 (TTMMLVFFTSIGLSANFSRLI), 95-115 (LVVFLFIAALLIFGQNVIGIA), 161-181 (IAIACATFGLVFGGIIGGPVA), 219-239 (SLIETIAMISVCLLIGQYLDV), 245-265 (ALQLPTFVWCLFTGVIVRNIL), 277-297 (AIDVLGSVGLSIFLAIALMSL), 307-327 (IDVLIVLAIQVAFMAAFAIFI), 338-358 (AVVLSAGHCGFGLGATPTAIA), and 373-393 (AFLIVPMVGAFFIDLINAALL).

Belongs to the glutamate:Na(+) symporter (ESS) (TC 2.A.27) family.

The protein localises to the cell inner membrane. Functionally, catalyzes the sodium-dependent transport of glutamate. The sequence is that of Sodium/glutamate symporter from Haemophilus influenzae (strain ATCC 51907 / DSM 11121 / KW20 / Rd).